Consider the following 734-residue polypeptide: 5-methyltetrahydropteroyltriglutamate--homocysteine methyltransferase (734 aa).

5-methyltetrahydropteroyltri-L-glutamate-binding positions include 15–18 (REFK) and K104. Residues 409–411 (IGS) and E462 each bind L-homocysteine. L-methionine-binding positions include 409-411 (IGS) and E462. 5-methyltetrahydropteroyltri-L-glutamate-binding positions include 493–494 (RC) and W539. D577 provides a ligand contact to L-homocysteine. D577 is an L-methionine binding site. Position 583 (E583) interacts with 5-methyltetrahydropteroyltri-L-glutamate. Zn(2+)-binding residues include H618, C620, and E642. The Proton donor role is filled by H672. A Zn(2+)-binding site is contributed by C704.

It belongs to the vitamin-B12 independent methionine synthase family. Zn(2+) serves as cofactor.

It carries out the reaction 5-methyltetrahydropteroyltri-L-glutamate + L-homocysteine = tetrahydropteroyltri-L-glutamate + L-methionine. Its pathway is amino-acid biosynthesis; L-methionine biosynthesis via de novo pathway; L-methionine from L-homocysteine (MetE route): step 1/1. In terms of biological role, catalyzes the transfer of a methyl group from 5-methyltetrahydrofolate to homocysteine resulting in methionine formation. The protein is 5-methyltetrahydropteroyltriglutamate--homocysteine methyltransferase of Thermotoga maritima (strain ATCC 43589 / DSM 3109 / JCM 10099 / NBRC 100826 / MSB8).